A 285-amino-acid polypeptide reads, in one-letter code: Probable endonuclease 4 (285 aa).

Zn(2+) contacts are provided by histidine 69, histidine 109, glutamate 145, aspartate 179, histidine 182, histidine 216, aspartate 229, histidine 231, and glutamate 261.

It belongs to the AP endonuclease 2 family. Zn(2+) serves as cofactor.

The catalysed reaction is Endonucleolytic cleavage to 5'-phosphooligonucleotide end-products.. Functionally, endonuclease IV plays a role in DNA repair. It cleaves phosphodiester bonds at apurinic or apyrimidinic (AP) sites, generating a 3'-hydroxyl group and a 5'-terminal sugar phosphate. The polypeptide is Probable endonuclease 4 (Salmonella arizonae (strain ATCC BAA-731 / CDC346-86 / RSK2980)).